We begin with the raw amino-acid sequence, 179 residues long: Translationally-controlled tumor protein homolog (179 aa).

The TCTP domain occupies 1 to 179; that stretch reads MIIYKDIISG…WKHGLEEMKV (179 aa).

Belongs to the TCTP family.

It localises to the cytoplasm. It is found in the cytoskeleton. Functionally, involved in protein synthesis. Involved in microtubule stabilization. This is Translationally-controlled tumor protein homolog from Aspergillus fumigatus (strain ATCC MYA-4609 / CBS 101355 / FGSC A1100 / Af293) (Neosartorya fumigata).